A 375-amino-acid chain; its full sequence is Carbamoyl phosphate synthase small chain (375 aa).

Positions 1 to 180 are CPSase; sequence MSKALLVLED…DAYVVEPKGK (180 aa). L-glutamine is bound by residues Ser-46, Gly-232, and Gly-234. In terms of domain architecture, Glutamine amidotransferase type-1 spans 184 to 375; the sequence is TVAALDLGIK…SFVELMAAQR (192 aa). The active-site Nucleophile is Cys-260. The L-glutamine site is built by Phe-261, Gln-264, Asn-302, Gly-304, and Phe-305. Catalysis depends on residues His-350 and Glu-352.

Belongs to the CarA family. Composed of two chains; the small (or glutamine) chain promotes the hydrolysis of glutamine to ammonia, which is used by the large (or ammonia) chain to synthesize carbamoyl phosphate. Tetramer of heterodimers (alpha,beta)4.

The enzyme catalyses hydrogencarbonate + L-glutamine + 2 ATP + H2O = carbamoyl phosphate + L-glutamate + 2 ADP + phosphate + 2 H(+). It catalyses the reaction L-glutamine + H2O = L-glutamate + NH4(+). The protein operates within amino-acid biosynthesis; L-arginine biosynthesis; carbamoyl phosphate from bicarbonate: step 1/1. Its pathway is pyrimidine metabolism; UMP biosynthesis via de novo pathway; (S)-dihydroorotate from bicarbonate: step 1/3. Its function is as follows. Small subunit of the glutamine-dependent carbamoyl phosphate synthetase (CPSase). CPSase catalyzes the formation of carbamoyl phosphate from the ammonia moiety of glutamine, carbonate, and phosphate donated by ATP, constituting the first step of 2 biosynthetic pathways, one leading to arginine and/or urea and the other to pyrimidine nucleotides. The small subunit (glutamine amidotransferase) binds and cleaves glutamine to supply the large subunit with the substrate ammonia. The protein is Carbamoyl phosphate synthase small chain of Mycobacterium leprae (strain TN).